Consider the following 158-residue polypeptide: UPF0260 protein RL1394 (158 aa).

Belongs to the UPF0260 family.

The protein is UPF0260 protein RL1394 of Rhizobium johnstonii (strain DSM 114642 / LMG 32736 / 3841) (Rhizobium leguminosarum bv. viciae).